A 65-amino-acid polypeptide reads, in one-letter code: Prokaryotic ubiquitin-like protein Pup (65 aa).

Residues 1-13 (MAQEQKQPRKSSE) are compositionally biased toward basic and acidic residues. Positions 1–34 (MAQEQKQPRKSSEADEAVEAVAETDVSERKEALD) are disordered. The interval 21-59 (VAETDVSERKEALDSDVDDILDEIDDVLETNAEDFVKSF) is ARC ATPase binding. The stretch at 25 to 49 (DVSERKEALDSDVDDILDEIDDVLE) forms a coiled coil. Residue E65 forms an Isoglutamyl lysine isopeptide (Glu-Lys) (interchain with K-? in acceptor proteins) linkage.

This sequence belongs to the prokaryotic ubiquitin-like protein family. As to quaternary structure, strongly interacts with the proteasome-associated ATPase ARC through a hydrophobic interface; the interacting region of Pup lies in its C-terminal half. There is one Pup binding site per ARC hexamer ring.

It participates in protein degradation; proteasomal Pup-dependent pathway. Functionally, protein modifier that is covalently attached to lysine residues of substrate proteins, thereby targeting them for proteasomal degradation. The tagging system is termed pupylation. The sequence is that of Prokaryotic ubiquitin-like protein Pup from Nocardioides sp. (strain ATCC BAA-499 / JS614).